A 121-amino-acid polypeptide reads, in one-letter code: Large ribosomal subunit protein bL12 (121 aa).

It belongs to the bacterial ribosomal protein bL12 family. In terms of assembly, homodimer. Part of the ribosomal stalk of the 50S ribosomal subunit. Forms a multimeric L10(L12)X complex, where L10 forms an elongated spine to which 2 to 4 L12 dimers bind in a sequential fashion. Binds GTP-bound translation factors.

Forms part of the ribosomal stalk which helps the ribosome interact with GTP-bound translation factors. Is thus essential for accurate translation. The sequence is that of Large ribosomal subunit protein bL12 from Clostridium perfringens (strain 13 / Type A).